A 503-amino-acid chain; its full sequence is DEAD-box ATP-dependent RNA helicase CshA (503 aa).

The Q motif signature appears at Gln2–Lys30. The Helicase ATP-binding domain maps to Ile33–Val203. Ala46–Thr53 serves as a coordination point for ATP. A DEAD box motif is present at residues Asp150–Asp153. One can recognise a Helicase C-terminal domain in the interval Gln214 to Leu375. Residues Glu436 to Lys503 are disordered. Basic residues predominate over residues Lys466–Thr480. Residues Asp481–Arg490 show a composition bias toward basic and acidic residues.

The protein belongs to the DEAD box helicase family. CshA subfamily. As to quaternary structure, oligomerizes, may be a member of the RNA degradosome.

It is found in the cytoplasm. The enzyme catalyses ATP + H2O = ADP + phosphate + H(+). Its function is as follows. DEAD-box RNA helicase possibly involved in RNA degradation. Unwinds dsRNA in both 5'- and 3'-directions, has RNA-dependent ATPase activity. This is DEAD-box ATP-dependent RNA helicase CshA from Staphylococcus haemolyticus (strain JCSC1435).